Reading from the N-terminus, the 282-residue chain is Phosphatidylserine decarboxylase proenzyme (282 aa).

Active-site charge relay system; for autoendoproteolytic cleavage activity residues include aspartate 88, histidine 144, and serine 247. The active-site Schiff-base intermediate with substrate; via pyruvic acid; for decarboxylase activity is the serine 247. The residue at position 247 (serine 247) is a Pyruvic acid (Ser); by autocatalysis.

This sequence belongs to the phosphatidylserine decarboxylase family. PSD-B subfamily. Prokaryotic type I sub-subfamily. As to quaternary structure, heterodimer of a large membrane-associated beta subunit and a small pyruvoyl-containing alpha subunit. The cofactor is pyruvate. In terms of processing, is synthesized initially as an inactive proenzyme. Formation of the active enzyme involves a self-maturation process in which the active site pyruvoyl group is generated from an internal serine residue via an autocatalytic post-translational modification. Two non-identical subunits are generated from the proenzyme in this reaction, and the pyruvate is formed at the N-terminus of the alpha chain, which is derived from the carboxyl end of the proenzyme. The autoendoproteolytic cleavage occurs by a canonical serine protease mechanism, in which the side chain hydroxyl group of the serine supplies its oxygen atom to form the C-terminus of the beta chain, while the remainder of the serine residue undergoes an oxidative deamination to produce ammonia and the pyruvoyl prosthetic group on the alpha chain. During this reaction, the Ser that is part of the protease active site of the proenzyme becomes the pyruvoyl prosthetic group, which constitutes an essential element of the active site of the mature decarboxylase.

It is found in the cell membrane. The enzyme catalyses a 1,2-diacyl-sn-glycero-3-phospho-L-serine + H(+) = a 1,2-diacyl-sn-glycero-3-phosphoethanolamine + CO2. It participates in phospholipid metabolism; phosphatidylethanolamine biosynthesis; phosphatidylethanolamine from CDP-diacylglycerol: step 2/2. Functionally, catalyzes the formation of phosphatidylethanolamine (PtdEtn) from phosphatidylserine (PtdSer). This is Phosphatidylserine decarboxylase proenzyme from Xanthomonas oryzae pv. oryzae (strain KACC10331 / KXO85).